The primary structure comprises 611 residues: Protein Spindly (611 aa).

Residues 1 to 288 (MEESETVLKL…QFQSLQKQHA (288 aa)) adopt a coiled-coil conformation. Basic and acidic residues predominate over residues 499 to 511 (LKEDSSLSTKEQD). The interval 499–611 (LKEDSSLSTK…PAATTQCPQQ (113 aa)) is disordered. The segment covering 549 to 567 (RNTNNCSVTSTSPRSASEE) has biased composition (polar residues). Positions 570–583 (SESKRFDEEQEKRK) are enriched in basic and acidic residues.

This sequence belongs to the Spindly family.

The protein resides in the chromosome. Its subcellular location is the centromere. It is found in the kinetochore. Functionally, required for the localization of dynein and dynactin to the mitotic kintochore. Dynein is believed to control the initial lateral interaction between the kinetochore and spindle microtubules and to facilitate the subsequent formation of end-on kinetochore-microtubule attachments mediated by the NDC80 complex. May act as an adapter protein linking the dynein motor complex to various cargos. The polypeptide is Protein Spindly (spdl1) (Xenopus tropicalis (Western clawed frog)).